The sequence spans 125 residues: N-alpha-acetyltransferase 38, NatC auxiliary subunit (125 aa).

The tract at residues 1–42 (MAGAGPTMLLREENGCCSRRQSSSSAGDSDGEQEDSPATRAR) is disordered. An N-acetylalanine modification is found at A2. Positions 18-28 (SRRQSSSSAGD) are enriched in low complexity. Phosphoserine occurs at positions 22, 25, and 29. Residues 40–118 (RARQQLEALL…IVSIEVQRES (79 aa)) form the Sm domain.

It belongs to the snRNP Sm proteins family. Component of the N-terminal acetyltransferase C (NatC) complex, which is composed of NAA35, NAA38 and NAA30.

The protein localises to the cytoplasm. It is found in the nucleus. In terms of biological role, auxillary component of the N-terminal acetyltransferase C (NatC) complex which catalyzes acetylation of N-terminal methionine residues. N-terminal acetylation protects proteins from ubiquitination and degradation by the N-end rule pathway. The chain is N-alpha-acetyltransferase 38, NatC auxiliary subunit (Naa38) from Mus musculus (Mouse).